A 396-amino-acid polypeptide reads, in one-letter code: Elongation factor Tu (396 aa).

The tr-type G domain maps to 10–206; it reads KPHCNIGTIG…AVDAYIPQPE (197 aa). Residues 19–26 are G1; it reads GHVDHGKT. Residue 19–26 participates in GTP binding; that stretch reads GHVDHGKT. Residue Thr26 coordinates Mg(2+). Residues 60 to 64 are G2; sequence GITIS. Positions 81–84 are G3; it reads DCPG. GTP contacts are provided by residues 81 to 85 and 136 to 139; these read DCPGH and NKVD. The segment at 136–139 is G4; it reads NKVD. The tract at residues 174-176 is G5; sequence SAL.

This sequence belongs to the TRAFAC class translation factor GTPase superfamily. Classic translation factor GTPase family. EF-Tu/EF-1A subfamily. As to quaternary structure, monomer.

It is found in the cytoplasm. The catalysed reaction is GTP + H2O = GDP + phosphate + H(+). Functionally, GTP hydrolase that promotes the GTP-dependent binding of aminoacyl-tRNA to the A-site of ribosomes during protein biosynthesis. In Gluconacetobacter diazotrophicus (strain ATCC 49037 / DSM 5601 / CCUG 37298 / CIP 103539 / LMG 7603 / PAl5), this protein is Elongation factor Tu.